A 440-amino-acid polypeptide reads, in one-letter code: KH domain-containing protein 3 (440 aa).

The tract at residues 1–39 (MASLKRFQTLVPLDHKQGTLFEIIGEPKLPKWFHVECLE) is involved in RNA binding. The 79-residue stretch at 40–118 (DPKRLYVEPR…CRMKLMEIEA (79 aa)) folds into the KH; atypical domain. The tract at residues 132 to 201 (KAATQPAPVK…EVREAATEQA (70 aa)) is disordered. Position 151 is a phosphoserine; by ATR (Ser-151). Phosphothreonine occurs at positions 274 and 286. Positions 341 to 440 (VREAATQLSP…RDAWESFIIL (100 aa)) are required for interaction with NUMA1 and regulation of apoptosis in response to DNA damage. Ser-349 is modified (phosphoserine).

Belongs to the KHDC1 family. Component of the subcortical maternal complex (SCMC), at least composed of NLRP5, KHDC3, OOEP, and TLE6. Within the complex, interacts with NLRP5, OOEP and TLE6. The SCMC may facilitate translocation of its components between the nuclear and cytoplasmic compartments. Forms a scaffold complex with OOEP/FLOPED, and interacts with BLM and TRIM25 at DNA replication forks. Interacts with PARP1; the interaction is increased following the formation of DNA double-strand breaks. Interacts (via C-terminus) with NUMA1. Post-translationally, phosphorylation at Ser-151 is required to promote stalled fork restart. Detected in ovary, but not in testis or somatic tissues. In the ovary, expressed in growing oocytes.

It localises to the cytoplasm. It is found in the cell cortex. The protein resides in the nucleus. Its subcellular location is the mitochondrion. The protein localises to the cytoskeleton. It localises to the microtubule organizing center. It is found in the centrosome. The protein resides in the chromosome. Its function is as follows. Component of the subcortical maternal complex (SCMC), a multiprotein complex that plays a key role in early embryonic development. The SCMC complex is a structural constituent of cytoplasmic lattices, which consist in fibrous structures found in the cytoplasm of oocytes and preimplantation embryos. They are required to store maternal proteins critical for embryonic development, such as proteins that control epigenetic reprogramming of the preimplantation embryo, and prevent their degradation or activation. KHDC3 ensures proper spindle assembly by regulating the localization of AURKA via RHOA signaling and of PLK1 via a RHOA-independent process. Required for the localization of MAD2L1 to kinetochores to enable spindle assembly checkpoint function. As part of the OOEP-KHDC3 scaffold, recruits BLM and TRIM25 to DNA replication forks, thereby promoting the ubiquitination of BLM by TRIM25, enhancing BLM retainment at replication forks and therefore promoting stalled replication fork restart. Regulates homologous recombination-mediated DNA repair via recruitment of RAD51 to sites of DNA double-strand breaks, and sustainment of PARP1 activity, which in turn modulates downstream ATM or ATR activation. Activation of ATM or ATR in response to DNA double-strand breaks may be cell-type specific. Its role in DNA double-strand break repair is independent of its role in restarting stalled replication forks. Promotes neural stem cell neurogenesis and neuronal differentiation in the hippocampus. May regulate normal development of learning, memory and anxiety. Capable of binding RNA. This is KH domain-containing protein 3 from Mus musculus (Mouse).